Reading from the N-terminus, the 1466-residue chain is DNA-directed RNA polymerase subunit beta'' (1466 aa).

Zn(2+) is bound by residues Cys220, Cys296, Cys303, and Cys306. Residues 618-725 form a disordered region; it reads TREEDLEDEY…EDEYDSSEED (108 aa). Acidic residues-rich tracts occupy residues 621–631, 639–651, and 707–725; these read EDLEDEYETLE, DEYE…DEYG, and LEED…SEED.

The protein belongs to the RNA polymerase beta' chain family. RpoC2 subfamily. In terms of assembly, in plastids the minimal PEP RNA polymerase catalytic core is composed of four subunits: alpha, beta, beta', and beta''. When a (nuclear-encoded) sigma factor is associated with the core the holoenzyme is formed, which can initiate transcription. It depends on Zn(2+) as a cofactor.

Its subcellular location is the plastid. The protein resides in the chloroplast. The enzyme catalyses RNA(n) + a ribonucleoside 5'-triphosphate = RNA(n+1) + diphosphate. DNA-dependent RNA polymerase catalyzes the transcription of DNA into RNA using the four ribonucleoside triphosphates as substrates. This chain is DNA-directed RNA polymerase subunit beta'', found in Agrostis stolonifera (Creeping bentgrass).